A 206-amino-acid chain; its full sequence is Probable N-acetyltransferase 14 (206 aa).

The N-acetyltransferase domain maps to 9–206 (LSVREMREEE…TIVQEFRKDI (198 aa)). 2 helical membrane passes run 37–57 (LILY…ASSG) and 60–80 (FILN…IVGL).

It belongs to the camello family.

It is found in the membrane. Probable acetyltransferase. This chain is Probable N-acetyltransferase 14 (nat14), found in Xenopus tropicalis (Western clawed frog).